We begin with the raw amino-acid sequence, 240 residues long: LexA repressor (240 aa).

The H-T-H motif DNA-binding region spans 26 to 46 (FDEMKDALDLASKSGIHRLIT). Active-site for autocatalytic cleavage activity residues include serine 160 and lysine 198.

Belongs to the peptidase S24 family. Homodimer.

The enzyme catalyses Hydrolysis of Ala-|-Gly bond in repressor LexA.. Represses a number of genes involved in the response to DNA damage (SOS response), including recA and lexA. In the presence of single-stranded DNA, RecA interacts with LexA causing an autocatalytic cleavage which disrupts the DNA-binding part of LexA, leading to derepression of the SOS regulon and eventually DNA repair. This Agrobacterium fabrum (strain C58 / ATCC 33970) (Agrobacterium tumefaciens (strain C58)) protein is LexA repressor.